A 366-amino-acid polypeptide reads, in one-letter code: Chorismate synthase (366 aa).

2 residues coordinate NADP(+): R47 and R53. FMN-binding positions include 124-126 (RSS), G286, 301-305 (KPTAT), and R327.

It belongs to the chorismate synthase family. As to quaternary structure, homotetramer. The cofactor is FMNH2.

The catalysed reaction is 5-O-(1-carboxyvinyl)-3-phosphoshikimate = chorismate + phosphate. It functions in the pathway metabolic intermediate biosynthesis; chorismate biosynthesis; chorismate from D-erythrose 4-phosphate and phosphoenolpyruvate: step 7/7. Functionally, catalyzes the anti-1,4-elimination of the C-3 phosphate and the C-6 proR hydrogen from 5-enolpyruvylshikimate-3-phosphate (EPSP) to yield chorismate, which is the branch point compound that serves as the starting substrate for the three terminal pathways of aromatic amino acid biosynthesis. This reaction introduces a second double bond into the aromatic ring system. The chain is Chorismate synthase from Microcystis aeruginosa (strain NIES-843 / IAM M-2473).